The sequence spans 440 residues: 3-phosphoshikimate 1-carboxyvinyltransferase (440 aa).

3-phosphoshikimate contacts are provided by lysine 25, serine 26, and arginine 30. Lysine 25 contacts phosphoenolpyruvate. Residues glycine 96 and arginine 124 each coordinate phosphoenolpyruvate. 3-phosphoshikimate is bound by residues serine 168, glutamine 169, aspartate 310, and lysine 337. Residue glutamine 169 coordinates phosphoenolpyruvate. Aspartate 310 acts as the Proton acceptor in catalysis. The phosphoenolpyruvate site is built by arginine 341, arginine 382, and lysine 409.

It belongs to the EPSP synthase family. In terms of assembly, monomer.

It localises to the cytoplasm. It catalyses the reaction 3-phosphoshikimate + phosphoenolpyruvate = 5-O-(1-carboxyvinyl)-3-phosphoshikimate + phosphate. Its pathway is metabolic intermediate biosynthesis; chorismate biosynthesis; chorismate from D-erythrose 4-phosphate and phosphoenolpyruvate: step 6/7. In terms of biological role, catalyzes the transfer of the enolpyruvyl moiety of phosphoenolpyruvate (PEP) to the 5-hydroxyl of shikimate-3-phosphate (S3P) to produce enolpyruvyl shikimate-3-phosphate and inorganic phosphate. This Chlamydia trachomatis serovar L2 (strain ATCC VR-902B / DSM 19102 / 434/Bu) protein is 3-phosphoshikimate 1-carboxyvinyltransferase.